A 959-amino-acid chain; its full sequence is Protein moonraker (959 aa).

A disordered region spans residues 124–156; it reads LPHSSHKGMHTKVERKDSKSQDVCHCSHQPSRV. A compositionally biased stretch (basic and acidic residues) spans 134-145; that stretch reads TKVERKDSKSQD. Serine 279 bears the Phosphoserine mark. Basic and acidic residues predominate over residues 456–470; the sequence is EEAPRIEDNGTDFKD. Disordered stretches follow at residues 456–560 and 572–610; these read EEAP…ASPK and RDAAKEQSLQQEDIHKESQLRGDAEQEAARLSWPDAESS. Positions 515–533 are enriched in polar residues; sequence PNQPYSKSRLQQTTVSSRL. The segment covering 547–558 has biased composition (pro residues); sequence WIPPNPTSPPAS. Residues 582-674 are a coiled coil; sequence QEDIHKESQL…TQLADKVEEA (93 aa). Positions 583–599 are enriched in basic and acidic residues; sequence EDIHKESQLRGDAEQEA. Serine 691 is subject to Phosphoserine. Disordered stretches follow at residues 692–721 and 848–883; these read SVEANSHLKDRPSRHAAAAAQPAEQASDVP and LDESVTTEEGSEKREAPLPLSREDLHQRKGQTPLSV. The span at 707–717 shows a compositional bias: low complexity; sequence AAAAAQPAEQA. Residues 857–874 are compositionally biased toward basic and acidic residues; it reads GSEKREAPLPLSREDLHQ. Residues 877 to 959 are necessary and sufficient for CEP20-binding; it reads GQTPLSVPPR…FTSEFLEAAA (83 aa).

In terms of assembly, interacts with CEP63 and WDR62. Forms a complex with OFD1 and CEP20/FOR20. Interacts with PCM1.

It localises to the cytoplasm. It is found in the cytoskeleton. The protein localises to the microtubule organizing center. Its subcellular location is the centrosome. The protein resides in the centriolar satellite. In terms of biological role, involved in centriole duplication. Positively regulates CEP63 centrosomal localization. Required for WDR62 centrosomal localization and promotes the centrosomal localization of CDK2. May play a role in cilium assembly. This is Protein moonraker (Kiaa0753) from Mus musculus (Mouse).